An 86-amino-acid chain; its full sequence is uncharacterized protein (86 aa).

This is an uncharacterized protein from Schizosaccharomyces pombe (strain 972 / ATCC 24843) (Fission yeast).